The sequence spans 147 residues: Ribonuclease VapC43 (147 aa).

One can recognise a PINc domain in the interval 3-139 (CVDVNVLVYA…ARFRRLRWRH (137 aa)). Mg(2+) contacts are provided by D5 and D108.

Belongs to the PINc/VapC protein family. Mg(2+) serves as cofactor.

Functionally, toxic component of a type II toxin-antitoxin (TA) system. An RNase. Its toxic effect is neutralized by coexpression with cognate antitoxin VapB43. This is Ribonuclease VapC43 from Mycobacterium tuberculosis (strain CDC 1551 / Oshkosh).